The following is a 393-amino-acid chain: 5-amino-6-(D-ribitylamino)uracil--L-tyrosine 4-hydroxyphenyl transferase (393 aa).

A Radical SAM core domain is found at V71 to N318. Residues C85, C89, and C92 each coordinate [4Fe-4S] cluster.

The protein belongs to the radical SAM superfamily. CofH family. Consists of two subunits, CofG and CofH. [4Fe-4S] cluster is required as a cofactor.

It catalyses the reaction 5-amino-6-(D-ribitylamino)uracil + L-tyrosine + S-adenosyl-L-methionine = 5-amino-5-(4-hydroxybenzyl)-6-(D-ribitylimino)-5,6-dihydrouracil + 2-iminoacetate + 5'-deoxyadenosine + L-methionine + H(+). The protein operates within cofactor biosynthesis; coenzyme F0 biosynthesis. In terms of biological role, catalyzes the radical-mediated synthesis of 5-amino-5-(4-hydroxybenzyl)-6-(D-ribitylimino)-5,6-dihydrouracil from 5-amino-6-(D-ribitylamino)uracil and L-tyrosine. The polypeptide is 5-amino-6-(D-ribitylamino)uracil--L-tyrosine 4-hydroxyphenyl transferase (Trichodesmium erythraeum (strain IMS101)).